The chain runs to 165 residues: CDP-archaeol synthase (165 aa).

A run of 4 helical transmembrane segments spans residues 41-61 (GLICGVLAGVLIGLVQIWLVG), 72-92 (ILSVTLLALGALLGDMGKSFI), 103-123 (AWPVADQYDLVVGAFLLTIIF), and 127-147 (WFFAVVTLPVLIAILVITPVL).

This sequence belongs to the CDP-archaeol synthase family. Mg(2+) is required as a cofactor.

Its subcellular location is the cell membrane. The enzyme catalyses 2,3-bis-O-(geranylgeranyl)-sn-glycerol 1-phosphate + CTP + H(+) = CDP-2,3-bis-O-(geranylgeranyl)-sn-glycerol + diphosphate. Its pathway is membrane lipid metabolism; glycerophospholipid metabolism. Its function is as follows. Catalyzes the formation of CDP-2,3-bis-(O-geranylgeranyl)-sn-glycerol (CDP-archaeol) from 2,3-bis-(O-geranylgeranyl)-sn-glycerol 1-phosphate (DGGGP) and CTP. This reaction is the third ether-bond-formation step in the biosynthesis of archaeal membrane lipids. The polypeptide is CDP-archaeol synthase (Methanoregula boonei (strain DSM 21154 / JCM 14090 / 6A8)).